Reading from the N-terminus, the 95-residue chain is Protein TusB (95 aa).

The protein belongs to the DsrH/TusB family. Heterohexamer, formed by a dimer of trimers. The hexameric TusBCD complex contains 2 copies each of TusB, TusC and TusD. The TusBCD complex interacts with TusE.

It localises to the cytoplasm. Part of a sulfur-relay system required for 2-thiolation of 5-methylaminomethyl-2-thiouridine (mnm(5)s(2)U) at tRNA wobble positions. In Shigella dysenteriae serotype 1 (strain Sd197), this protein is Protein TusB.